We begin with the raw amino-acid sequence, 764 residues long: Cyclin-F (764 aa).

Positions 19-27 (RKRVRKRAS) match the Nuclear localization signal 1 motif. The F-box domain maps to 28–75 (AVSLLSLPEELLVFVLQCLSAEDLLSVRAVHSHLCDIIDTNASIWARV). In terms of domain architecture, Cyclin N-terminal spans 307-404 (TKRYILVDWL…EVISVLDGKI (98 aa)). The short motif at 309 to 312 (RYIL) is the D box 1 element. The Nuclear localization signal 2 signature appears at 570 to 575 (SSKRRR). Positions 583–738 (RGAFVATPTA…PSQRIRRQVK (156 aa)) are PEST. The interval 662–754 (CEEDEQEPPT…HSAGEAEQED (93 aa)) is disordered. Residues 682-692 (SSSSTSSSSSS) are compositionally biased toward low complexity. Residues 702–722 (SGYSSIQSFPSPTGSSALVSP) are compositionally biased toward polar residues. A compositionally biased stretch (basic residues) spans 732 to 742 (RIRRQVKRKNT).

The protein belongs to the cyclin family. Cyclin AB subfamily. In terms of assembly, component of the SCF(CCNF) complex. In terms of tissue distribution, expressed in the brain.

The protein localises to the nucleus. It localises to the cytoplasm. Its subcellular location is the perinuclear region. It is found in the cytoskeleton. The protein resides in the microtubule organizing center. The protein localises to the centrosome. It localises to the centriole. Substrate recognition component of a SCF (SKP1-CUL1-F-box protein) E3 ubiquitin-protein ligase complex which mediates the ubiquitination and subsequent proteasomal degradation of target proteins. The SCF(CCNF) E3 ubiquitin-protein ligase complex is an integral component of the ubiquitin proteasome system (UPS) and links proteasome degradation to the cell cycle. Mediates the substrate recognition and the proteasomal degradation of various target proteins during G2 phase involved in the regulation of cell cycle progression and in the maintenance of genome stability. May play a role in motor neuron development and axonal outgrowth. This is Cyclin-F (ccnf) from Danio rerio (Zebrafish).